Here is a 177-residue protein sequence, read N- to C-terminus: MMVWNWIDRTPRRVLALISLACVALLACGLYLQHVVGLVPCPMCIVQRYALIGLALLTGLASARSAKGWWLTLSALAALTAGFGATVAARQSWLQWYPPQSVSCGRDFYGMIESFPLSRAIPMILRGSGDCAAVDWSLLGGSIANWSFLCFALLGLLLLALLARGVRGARQRAPAPV.

Over 1–14 the chain is Cytoplasmic; it reads MMVWNWIDRTPRRV. Residues 15 to 31 traverse the membrane as a helical segment; it reads LALISLACVALLACGLY. Topologically, residues 32–49 are periplasmic; sequence LQHVVGLVPCPMCIVQRY. Cys-41 and Cys-44 are disulfide-bonded. Residues 50–64 traverse the membrane as a helical segment; that stretch reads ALIGLALLTGLASAR. The Cytoplasmic segment spans residues 65–70; the sequence is SAKGWW. Residues 71–89 form a helical membrane-spanning segment; that stretch reads LTLSALAALTAGFGATVAA. At 90 to 145 the chain is on the periplasmic side; the sequence is RQSWLQWYPPQSVSCGRDFYGMIESFPLSRAIPMILRGSGDCAAVDWSLLGGSIAN. Cysteines 104 and 131 form a disulfide. A helical membrane pass occupies residues 146 to 164; the sequence is WSFLCFALLGLLLLALLAR. Over 165 to 177 the chain is Cytoplasmic; sequence GVRGARQRAPAPV.

It belongs to the DsbB family.

The protein localises to the cell inner membrane. In terms of biological role, required for disulfide bond formation in some periplasmic proteins. Acts by oxidizing the DsbA protein. This Verminephrobacter eiseniae (strain EF01-2) protein is Disulfide bond formation protein B.